A 621-amino-acid chain; its full sequence is DnaJ homolog subfamily C member 2 (621 aa).

M1 is subject to N-acetylmethionine. A phosphoserine mark is found at S47, S49, S60, and S63. Residues 88–161 form the J domain; it reads DHYAVLGLGH…VKRRAFNSVD (74 aa). The tract at residues 160–250 is ZRF1-UBD; sequence VDPTFDNSVP…RDERRWIEKQ (91 aa). S183 carries the post-translational modification Phosphoserine. Disordered regions lie at residues 294-315 and 426-453; these read EKKA…QRQA and KEEA…GSKH. SANT domains lie at 449–511 and 549–604; these read NGSK…KLDP and TDFT…EMVK.

In terms of assembly, component of ribosome-associated complex (RAC), a heterodimer composed of Hsp70/DnaK-type chaperone HSPA14 and Hsp40/DnaJ-type chaperone DNAJC2. Interacts (via ZRF1-UBD region) with ID1. In terms of processing, phosphorylated in M (mitotic) phase.

The protein resides in the nucleus. The protein localises to the cytoplasm. Its subcellular location is the cytosol. Its function is as follows. Acts both as a chaperone in the cytosol and as a chromatin regulator in the nucleus. When cytosolic, acts as a molecular chaperone: component of the ribosome-associated complex (RAC), a complex involved in folding or maintaining nascent polypeptides in a folding-competent state. In the RAC complex, stimulates the ATPase activity of the ribosome-associated pool of Hsp70-type chaperones HSPA14 that bind to the nascent polypeptide chain. When nuclear, mediates the switching from polycomb-repressed genes to an active state: specifically recruited at histone H2A ubiquitinated at 'Lys-119' (H2AK119ub), and promotes the displacement of the polycomb PRC1 complex from chromatin, thereby facilitating transcription activation. This chain is DnaJ homolog subfamily C member 2 (DNAJC2), found in Bos taurus (Bovine).